A 362-amino-acid chain; its full sequence is Quinolone epoxide rearrangement protein penF (362 aa).

The active site involves H220. E222 functions as the Broensted acid in the catalytic mechanism.

It belongs to the quinolone epoxide rearrangement protein penF family.

The enzyme catalyses [(1'E)-5'-(3',3'-dimethyloxiran-2'-yl)-3'-hydroxy-3'-methylpent-1'-en-1'-yl]-quinolinone B = yaequinolone D. The protein operates within secondary metabolite biosynthesis. It functions in the pathway alkaloid biosynthesis. It participates in mycotoxin biosynthesis. Its function is as follows. Quinolone epoxide rearrangement protein; part of the gene cluster that mediates the biosynthesis of penigequinolones, potent insecticidal alkaloids that contain a highly modified 10-carbon prenyl group. The first stage is catalyzed by the nonribosomal peptide synthetase penN that condenses anthranilic acid and O-methyl-L-tyrosine to produce 4'-methoxycyclopeptin. 4'-methoxycyclopeptin is then converted to 4'-methoxydehydrocyclopeptin by the ketoglutarate-dependent dioxygenase penM through dehydrogenation to form a double bond between C-alpha and C-beta of the O-methyltyrosine side chain. PenM also converts its first product methoxydehydrocyclopeptin to 4'-methoxycyclopenin. The following conversion of 4'methoxycyclopenin into 4'-methoxyviridicatin is catalyzed by the cyclopenase penL. 4'-methoxyviridicatin is the precursor of quinolone natural products, and is further converted to quinolinone B. The prenyltransferase penI then catalyzes the canonical Friedel-Crafts alkylation of quinolinone B with dimethylallyl cation to yield dimethylallyl quinolone, which is subjected to FAD-dependent dehydrogenation by the FAD-linked oxidoreductase penH to yield conjugated aryl diene. The delta(3') double bond then serves as the site of the second alkylation with DMAPP catalyzed by the prenyltransferase penG to yield a carbenium ion intermediate, which can be attacked by H(2)O to yield a styrenyl quinolone containing a C3'-hydroxyprenyl chain, or undergo cyclization to yield yaequinolones J1 and J2. The conversion of the styrenyl quinolone into the tetrahydrofuran-containing yaequinolone C is performed by the FAD-dependent monooxygenase penE and involves epoxidation of the terminal C7'-C8' olefin, followed by epoxide ring opening initiated by the C3' hydroxyl group. The predicted cysteine hydrolase penJ acts as an epoxide hydrolase that enhances the rate of the 5-exo-tet cyclization step, increasing the yield of yaequinolone C. PenF catalyzes the cationic rearrangement of the epoxide formed by penE (before ring opening to produce yaequinolone C) into yaequinolone D. Finally, the short-chain dehydrogenase/reductase (SDR)-like reductase penD, catalyzes both the dehydration of yaequinolone D and the reduction of the resulting oxonium to yield penigequinolone. This chain is Quinolone epoxide rearrangement protein penF, found in Penicillium thymicola.